A 387-amino-acid chain; its full sequence is GTPase Obg (387 aa).

An Obg domain is found at 1–159 (MKFVDEAVIR…RSLRLELMLL (159 aa)). The OBG-type G domain maps to 160-333 (ADVGLLGMPN…LALKLMDFID (174 aa)). GTP contacts are provided by residues 166 to 173 (GMPNAGKS), 191 to 195 (FTTLV), 213 to 216 (DIPG), 283 to 286 (NKTD), and 314 to 316 (SAY). S173 and T193 together coordinate Mg(2+).

It belongs to the TRAFAC class OBG-HflX-like GTPase superfamily. OBG GTPase family. In terms of assembly, monomer. The cofactor is Mg(2+).

It localises to the cytoplasm. Functionally, an essential GTPase which binds GTP, GDP and possibly (p)ppGpp with moderate affinity, with high nucleotide exchange rates and a fairly low GTP hydrolysis rate. Plays a role in control of the cell cycle, stress response, ribosome biogenesis and in those bacteria that undergo differentiation, in morphogenesis control. In Shewanella loihica (strain ATCC BAA-1088 / PV-4), this protein is GTPase Obg.